The following is a 320-amino-acid chain: Aminoacyl tRNA synthase complex-interacting multifunctional protein 2 (320 aa).

Residues 31–52 (HSKTTSPATDAGHVQETSEPSL) are disordered. S36 bears the Phosphoserine mark. The tract at residues 82 to 162 (TPDADLDVTN…HTHSSVKNVP (81 aa)) is interaction with PRKN. Positions 162–225 (PENLLKCFGE…FLFSLFGQKH (64 aa)) are interaction with TP53. A GST C-terminal domain is found at 220–317 (LFGQKHSAVN…NLVPFSTALQ (98 aa)).

As to quaternary structure, part of the multisynthetase complex (MSC), a multisubunit complex that groups tRNA ligases for Arg (RARS1), Asp (DARS1), Gln (QARS1), Ile (IARS1), Leu (LARS1), Lys (KARS1), Met (MARS1) the bifunctional ligase for Glu and Pro (EPRS1) and the auxiliary subunits AIMP1/p43, AIMP2/p38 and EEF1E1/p18. Interacts (via N-terminus) with KARS1. Interacts with EPRS1. Forms a linear complex that contains MARS1, EEF1E1, EPRS1 and AIMP2 that is at the core of the multisubunit complex. Binds FUBP1 (via C-terminus). Interacts in both its unphosphorylated and phosphorylated forms with p53/TP53 (via N-terminus) in the nucleus following UV irradiation. Interacts (via N-terminus) with PRKN/parkin (via first RING-type domain). Interacts with TARS3. In terms of processing, phosphorylated on serine residues in response to UV irradiation. Post-translationally, ubiquitinated by PRKN, leading to its degradation by the proteasome.

The protein resides in the cytoplasm. It is found in the cytosol. Its subcellular location is the nucleus. Required for assembly and stability of the aminoacyl-tRNA synthase complex. Mediates ubiquitination and degradation of FUBP1, a transcriptional activator of MYC, leading to MYC down-regulation which is required for aveolar type II cell differentiation. Blocks MDM2-mediated ubiquitination and degradation of p53/TP53. Functions as a proapoptotic factor. This is Aminoacyl tRNA synthase complex-interacting multifunctional protein 2 (AIMP2) from Cricetulus griseus (Chinese hamster).